The following is a 286-amino-acid chain: E3 ubiquitin-protein ligase SINA-like 7 (286 aa).

The RING-type zinc-finger motif lies at 51 to 87 (CPICYEAFTIPIFQCDNGHLACSSCCPKLNNKCPACT). The interval 101–285 (VLESILIPCP…MRISVKKLNK (185 aa)) is SBD. The SIAH-type zinc-finger motif lies at 104–162 (SILIPCPNAKLGCKKNVSYGKELTHEKECMFSHCACPALDCNYTSSYKDLYTHYRITHM). The Zn(2+) site is built by Cys109, Cys116, His128, Cys132, Cys139, Cys144, His156, and His161.

This sequence belongs to the SINA (Seven in absentia) family.

The enzyme catalyses S-ubiquitinyl-[E2 ubiquitin-conjugating enzyme]-L-cysteine + [acceptor protein]-L-lysine = [E2 ubiquitin-conjugating enzyme]-L-cysteine + N(6)-ubiquitinyl-[acceptor protein]-L-lysine.. It participates in protein modification; protein ubiquitination. In terms of biological role, E3 ubiquitin-protein ligase that mediates ubiquitination and subsequent proteasomal degradation of target proteins. E3 ubiquitin ligases accept ubiquitin from an E2 ubiquitin-conjugating enzyme in the form of a thioester and then directly transfers the ubiquitin to targeted substrates. It probably triggers the ubiquitin-mediated degradation of different substrates. In Arabidopsis thaliana (Mouse-ear cress), this protein is E3 ubiquitin-protein ligase SINA-like 7.